The sequence spans 539 residues: Propionyl-CoA carboxylase beta chain, mitochondrial (539 aa).

The transit peptide at 1-28 directs the protein to the mitochondrion; that stretch reads MAAALRVAAVGARLSVLASGLRAAVRSL. A CoA carboxyltransferase N-terminal domain is found at 32–290; the sequence is ATSVNERIEN…SSQDPAPVRE (259 aa). Positions 32–533 are carboxyltransferase; the sequence is ATSVNERIEN…SKKVQRPWRK (502 aa). The residue at position 71 (S71) is a Phosphoserine. Position 99 is an N6-acetyllysine; alternate (K99). At K99 the chain carries N6-succinyllysine; alternate. K248 is subject to N6-succinyllysine. One can recognise a CoA carboxyltransferase C-terminal domain in the interval 294-533; that stretch reads PSDRLVPELD…SKKVQRPWRK (240 aa). Residues 325–358 form an acyl-CoA binding region; sequence DEREFFEIMPNYAKNIIVGFARMNGRTVGIVGNQ. K474 and K489 each carry N6-acetyllysine; alternate. Residues K474 and K489 each carry the N6-succinyllysine; alternate modification.

The protein belongs to the AccD/PCCB family. In terms of assembly, the holoenzyme is a dodecamer composed of 6 PCCA/alpha subunits and 6 PCCB/beta subunits.

The protein localises to the mitochondrion matrix. The catalysed reaction is propanoyl-CoA + hydrogencarbonate + ATP = (S)-methylmalonyl-CoA + ADP + phosphate + H(+). It carries out the reaction butanoyl-CoA + hydrogencarbonate + ATP = (2S)-ethylmalonyl-CoA + ADP + phosphate + H(+). Its pathway is metabolic intermediate metabolism; propanoyl-CoA degradation; succinyl-CoA from propanoyl-CoA: step 1/3. Its function is as follows. This is one of the 2 subunits of the biotin-dependent propionyl-CoA carboxylase (PCC), a mitochondrial enzyme involved in the catabolism of odd chain fatty acids, branched-chain amino acids isoleucine, threonine, methionine, and valine and other metabolites. Propionyl-CoA carboxylase catalyzes the carboxylation of propionyl-CoA/propanoyl-CoA to D-methylmalonyl-CoA/(S)-methylmalonyl-CoA. Within the holoenzyme, the alpha subunit catalyzes the ATP-dependent carboxylation of the biotin carried by the biotin carboxyl carrier (BCC) domain, while the beta subunit then transfers the carboxyl group from carboxylated biotin to propionyl-CoA. Propionyl-CoA carboxylase also significantly acts on butyryl-CoA/butanoyl-CoA, which is converted to ethylmalonyl-CoA/(2S)-ethylmalonyl-CoA at a much lower rate. Other alternative minor substrates include (2E)-butenoyl-CoA/crotonoyl-CoA. In Homo sapiens (Human), this protein is Propionyl-CoA carboxylase beta chain, mitochondrial.